Consider the following 536-residue polypeptide: Dual specificity calcium/calmodulin-dependent 3',5'-cyclic nucleotide phosphodiesterase 1B (536 aa).

Positions 1–20 (MELSPRSPPEMLEESDCPSP) are disordered. 2 positions are modified to phosphoserine: S7 and S15. 2 calmodulin-binding regions span residues 27 to 47 (PSKK…KQLE) and 118 to 141 (EKPK…MFRR). The region spanning 146 to 503 (VGPTYSTAVL…QKWKERAASG (358 aa)) is the PDEase domain. The active-site Proton donor is the H223. The Zn(2+) site is built by H227, H263, D264, and D370. Residue D264 coordinates Mg(2+). Disordered regions lie at residues 447–474 (LADE…VGDP) and 494–536 (QKWK…GNLD). The span at 455 to 464 (KNQPSFQWRQ) shows a compositional bias: polar residues. 2 positions are modified to phosphoserine: S466 and S514.

The protein belongs to the cyclic nucleotide phosphodiesterase family. PDE1 subfamily. As to quaternary structure, homodimer. It depends on Zn(2+) as a cofactor. The cofactor is Mg(2+).

Its subcellular location is the cytoplasm. It localises to the cytosol. It catalyses the reaction a nucleoside 3',5'-cyclic phosphate + H2O = a nucleoside 5'-phosphate + H(+). The enzyme catalyses 3',5'-cyclic GMP + H2O = GMP + H(+). The catalysed reaction is 3',5'-cyclic AMP + H2O = AMP + H(+). Its activity is regulated as follows. Type I PDE are activated by the binding of calmodulin in the presence of Ca(2+). Functionally, cyclic nucleotide phosphodiesterase with a dual specificity for the second messengers cAMP and cGMP, which are key regulators of many important physiological processes. Has a preference for cGMP as a substrate. This chain is Dual specificity calcium/calmodulin-dependent 3',5'-cyclic nucleotide phosphodiesterase 1B, found in Homo sapiens (Human).